The primary structure comprises 99 residues: Putative UPF0320 protein YDR543C (99 aa).

The segment at 80 to 99 is disordered; the sequence is EKSPPKSPKHKNILSFNNNT.

The protein belongs to the UPF0320 family.

This chain is Putative UPF0320 protein YDR543C, found in Saccharomyces cerevisiae (strain ATCC 204508 / S288c) (Baker's yeast).